The following is a 1347-amino-acid chain: Spermatogenesis-associated protein 31A1 (1347 aa).

Residues 23-43 form a helical membrane-spanning segment; sequence PWVLDIFLTLVFALGFFFLLL. Disordered regions lie at residues 55–89, 106–235, 373–397, 628–658, 899–955, and 1085–1160; these read PSPSPGKRKCPVGRRRRPRGRMKNHSLRAGRECPR, GPHL…STLI, EQDTTNPKPFWNMGENSKQLPGPQK, DESPGTSQAKGKPSPWQSSMSTGESSKEAQK, PRGI…REAV, and HEEP…PPSV. Positions 60 to 82 are enriched in basic residues; the sequence is GKRKCPVGRRRRPRGRMKNHSLR. The segment covering 165–178 has biased composition (polar residues); that stretch reads LASTPSPGPMTTSV. Residues 198 to 222 show a composition bias toward pro residues; that stretch reads PEPPALFPHPPHTPDPLACSPPPPK. Polar residues-rich tracts occupy residues 631–651 and 927–948; these read PGTSQAKGKPSPWQSSMSTGE and LTYSLTGSTQQSRSLGAQSSKA. Basic and acidic residues-rich tracts occupy residues 1108-1127 and 1137-1146; these read HKSEKSRKPNLEKHEERLEG and RKTEDTHQDE.

It belongs to the SPATA31 family.

It localises to the membrane. In terms of biological role, may play a role in spermatogenesis. The chain is Spermatogenesis-associated protein 31A1 from Homo sapiens (Human).